We begin with the raw amino-acid sequence, 360 residues long: 3-isopropylmalate dehydrogenase (360 aa).

76-89 lines the NAD(+) pocket; sequence GPKWDTIERDIRPE. Positions 96, 106, 134, and 224 each coordinate substrate. Residues Asp-224, Asp-248, and Asp-252 each coordinate Mg(2+). 282–294 contacts NAD(+); the sequence is GSAPDIAGQGIAN.

Belongs to the isocitrate and isopropylmalate dehydrogenases family. LeuB type 1 subfamily. In terms of assembly, homodimer. Mg(2+) is required as a cofactor. It depends on Mn(2+) as a cofactor.

Its subcellular location is the cytoplasm. It catalyses the reaction (2R,3S)-3-isopropylmalate + NAD(+) = 4-methyl-2-oxopentanoate + CO2 + NADH. It participates in amino-acid biosynthesis; L-leucine biosynthesis; L-leucine from 3-methyl-2-oxobutanoate: step 3/4. Its function is as follows. Catalyzes the oxidation of 3-carboxy-2-hydroxy-4-methylpentanoate (3-isopropylmalate) to 3-carboxy-4-methyl-2-oxopentanoate. The product decarboxylates to 4-methyl-2 oxopentanoate. The protein is 3-isopropylmalate dehydrogenase of Pseudomonas syringae pv. tomato (strain ATCC BAA-871 / DC3000).